We begin with the raw amino-acid sequence, 323 residues long: Serine/threonine-protein phosphatase PP1-gamma catalytic subunit (323 aa).

An N-acetylalanine modification is found at alanine 2. Mn(2+) is bound by residues aspartate 64, histidine 66, aspartate 92, and asparagine 124. Histidine 125 (proton donor) is an active-site residue. Mn(2+) contacts are provided by histidine 173 and histidine 248. Phosphothreonine occurs at positions 307 and 311.

This sequence belongs to the PPP phosphatase family. PP-1 subfamily. In terms of assembly, PP1 comprises a catalytic subunit, PPP1CA, PPP1CB or PPP1CC, which is folded into its native form by inhibitor 2 and glycogen synthetase kinase 3, and then complexed to one or several targeting or regulatory subunits. PPP1R12A, PPP1R12B and PPP1R12C mediate binding to myosin. PPP1R3A (in skeletal muscle), PPP1R3B (in liver), PPP1R3C, PPP1R3D and PPP1R3F (in brain) mediate binding to glycogen. PPP1R15A and PPP1R15B mediate binding to EIF2S1. Part of a complex containing PPP1R15B, PP1 and NCK1/2. Interacts with PPP1R3B, PPP1R7 and CDCA2. Interacts with IKFZ1; the interaction targets PPP1CC to pericentromeric heterochromatin, dephosphorylates IKAROS, stabilizes it and prevents it from degradation. Interacts with NOM1 and PPP1R8. Component of the PTW/PP1 phosphatase complex, composed of PPP1R10/PNUTS, TOX4, WDR82, and PPP1CA or PPP1CB or PPP1CC. Interacts with PPP1R8. Interacts with NEK2. Interacts with PPP1R42; the interaction is direct. Interacts with URI1; the interaction is phosphorylation-dependent and occurs in a growth factor-dependent manner. Interacts with FOXP3. Interacts with TMEM225 (via RVxF motif). Interacts with MKI67. Interacts with RRP1B; this targets PPP1CC to the nucleolus. Interacts with DYNLT4. Interacts (via RVxF motif) with FIRRM; regulates PLK1 kinase activity. Interacts with the KNL1 complex subunit KNL1; the interaction is direct and mutually exclusive with KNL1 binding to microtubules. Component of the SHOC2-MRAS-PP1c (SMP) complex consisting of SHOC2, GTP-bound M-Ras/MRAS and the catalytic subunit of protein phosphatase 1 (either PPP1CA, PPP1CB or PPP1CC). SHOC2 and PP1c preferably bind M-Ras/MRAS, but they also bind K-Ras/KRAS, N-Ras/NRAS and H-Ras/HRAS; these interactions are GTP-dependent and both SHOC2 and PP1c are required to form a stable complex. Interacts with SHOC2 in the absence of Ras GTPases. Requires Mn(2+) as cofactor. In terms of processing, phosphorylated by NEK2.

It localises to the cytoplasm. It is found in the nucleus. The protein localises to the cleavage furrow. Its subcellular location is the nucleolus. The protein resides in the nucleoplasm. It localises to the chromosome. It is found in the centromere. The protein localises to the kinetochore. Its subcellular location is the nucleus speckle. The protein resides in the midbody. It localises to the mitochondrion. It is found in the cytoskeleton. The protein localises to the microtubule organizing center. It catalyses the reaction O-phospho-L-seryl-[protein] + H2O = L-seryl-[protein] + phosphate. It carries out the reaction O-phospho-L-threonyl-[protein] + H2O = L-threonyl-[protein] + phosphate. Inactivated by binding to URI1. In terms of biological role, protein phosphatase that associates with over 200 regulatory proteins to form highly specific holoenzymes which dephosphorylate hundreds of biological targets. Protein phosphatase 1 (PP1) is essential for cell division, and participates in the regulation of glycogen metabolism, muscle contractility and protein synthesis. Dephosphorylates RPS6KB1. Involved in regulation of ionic conductances and long-term synaptic plasticity. May play an important role in dephosphorylating substrates such as the postsynaptic density-associated Ca(2+)/calmodulin dependent protein kinase II. Component of the PTW/PP1 phosphatase complex, which plays a role in the control of chromatin structure and cell cycle progression during the transition from mitosis into interphase. Regulates the recruitment of the SKA complex to kinetochores. Core component of the SHOC2-MRAS-PP1c (SMP) holophosphatase complex that regulates the MAPK pathway activation. Dephosphorylates MKI67 at the onset of anaphase. The SMP complex specifically dephosphorylates the inhibitory phosphorylation at 'Ser-259' of RAF1 kinase, 'Ser-365' of BRAF kinase and 'Ser-214' of ARAF kinase, stimulating their kinase activities. The SMP complex enhances the dephosphorylation activity and substrate specificity of PP1c. The polypeptide is Serine/threonine-protein phosphatase PP1-gamma catalytic subunit (PPP1CC) (Canis lupus familiaris (Dog)).